Consider the following 375-residue polypeptide: Chaperone protein DnaJ (375 aa).

Positions 5 to 70 (DYYEVLGVER…SKRAAFDQYG (66 aa)) constitute a J domain. The CR-type zinc-finger motif lies at 134-212 (GTTVSIRVPT…CHGEGRVEEY (79 aa)). Cys-147, Cys-150, Cys-164, Cys-167, Cys-186, Cys-189, Cys-200, and Cys-203 together coordinate Zn(2+). 4 CXXCXGXG motif repeats span residues 147–154 (CQPCDGSG), 164–171 (CPTCGGIG), 186–193 (CPRCHGQG), and 200–207 (CTSCHGEG).

It belongs to the DnaJ family. In terms of assembly, homodimer. Zn(2+) serves as cofactor.

The protein resides in the cytoplasm. Functionally, participates actively in the response to hyperosmotic and heat shock by preventing the aggregation of stress-denatured proteins and by disaggregating proteins, also in an autonomous, DnaK-independent fashion. Unfolded proteins bind initially to DnaJ; upon interaction with the DnaJ-bound protein, DnaK hydrolyzes its bound ATP, resulting in the formation of a stable complex. GrpE releases ADP from DnaK; ATP binding to DnaK triggers the release of the substrate protein, thus completing the reaction cycle. Several rounds of ATP-dependent interactions between DnaJ, DnaK and GrpE are required for fully efficient folding. Also involved, together with DnaK and GrpE, in the DNA replication of plasmids through activation of initiation proteins. This chain is Chaperone protein DnaJ, found in Pseudomonas putida (strain ATCC 47054 / DSM 6125 / CFBP 8728 / NCIMB 11950 / KT2440).